Consider the following 193-residue polypeptide: Acyl carrier protein phosphodiesterase (193 aa).

It belongs to the AcpH family.

The enzyme catalyses holo-[ACP] + H2O = apo-[ACP] + (R)-4'-phosphopantetheine + H(+). Its function is as follows. Converts holo-ACP to apo-ACP by hydrolytic cleavage of the phosphopantetheine prosthetic group from ACP. The polypeptide is Acyl carrier protein phosphodiesterase (Salmonella dublin (strain CT_02021853)).